Consider the following 67-residue polypeptide: Large ribosomal subunit protein bL35 (67 aa).

This sequence belongs to the bacterial ribosomal protein bL35 family.

The chain is Large ribosomal subunit protein bL35 from Leptospira interrogans serogroup Icterohaemorrhagiae serovar Lai (strain 56601).